A 669-amino-acid polypeptide reads, in one-letter code: Armadillo repeat-containing protein gudu (669 aa).

Polar residues predominate over residues 1–10 (MIGTSSGTSH). The segment at 1-53 (MIGTSSGTSHNRSRKKKEQCGSCPNRFSKDKRQVAAEDSDTTEVESSTDEEER) is disordered. The span at 37–51 (EDSDTTEVESSTDEE) shows a compositional bias: acidic residues. ARM repeat units lie at residues 100–139 (QINQ…DITL), 141–180 (IDIR…NVCK), 240–279 (KHNM…KCSS), 281–320 (PKFQ…KCAF), 322–365 (GTTR…MCAV), 367–406 (DANV…ECVR), 408–447 (QSNR…ECAE), 492–531 (DSAE…TIAQ), 574–613 (GNNT…KLSM), and 615–654 (PQNC…NIRE).

As to expression, highly expressed in testis.

In terms of biological role, important for spermatogenesis where it may have a role in sperm individualization. The protein is Armadillo repeat-containing protein gudu of Drosophila melanogaster (Fruit fly).